A 376-amino-acid chain; its full sequence is Alanine racemase (376 aa).

The active-site Proton acceptor; specific for D-alanine is lysine 40. N6-(pyridoxal phosphate)lysine is present on lysine 40. A substrate-binding site is contributed by arginine 138. Tyrosine 270 serves as the catalytic Proton acceptor; specific for L-alanine. Residue methionine 317 coordinates substrate.

Belongs to the alanine racemase family. Pyridoxal 5'-phosphate serves as cofactor.

The enzyme catalyses L-alanine = D-alanine. The protein operates within amino-acid biosynthesis; D-alanine biosynthesis; D-alanine from L-alanine: step 1/1. In terms of biological role, catalyzes the interconversion of L-alanine and D-alanine. May also act on other amino acids. The chain is Alanine racemase (alr) from Lactobacillus delbrueckii subsp. bulgaricus (strain ATCC BAA-365 / Lb-18).